The chain runs to 299 residues: uncharacterized protein (299 aa).

The disordered stretch occupies residues 1 to 38 (MSLDSNSDTEFELVPKFQTQPTRGDAPKSPELEEVSTV).

It belongs to the calycin superfamily. Fatty-acid binding protein (FABP) family.

This is an uncharacterized protein from Caenorhabditis elegans.